A 2171-amino-acid chain; its full sequence is DExH-box ATP-dependent RNA helicase DExH12 (2171 aa).

Disordered regions lie at residues 24 to 80 (SLVL…KERD), 218 to 267 (EENE…NEGT), and 383 to 426 (TAKE…ESGW). Composition is skewed to basic and acidic residues over residues 31 to 40 (NRPRDTHEPT) and 50 to 80 (IDPRSFGDRVAKGRPQELEDKLKKSKKKERD). The span at 218-242 (EENEEDDEESDPDMVEEDDDEEDDE) shows a compositional bias: acidic residues. The span at 383–423 (TAKEREENLQKSINEEARRLKDETGGDGGRGRRDVADRDSE) shows a compositional bias: basic and acidic residues. In terms of domain architecture, Helicase ATP-binding 1 spans 514 to 697 (DTALFKAENI…FLRVDLKKGL (184 aa)). ATP is bound at residue 527–534 (APTGAGKT). Positions 639–642 (DEIH) match the DEIH box motif. Residues 731-941 (LCYQKVLAGA…GTVQNAREAC (211 aa)) enclose the Helicase C-terminal 1 domain. The SEC63 1 domain maps to 1006-1308 (TDLGRIASYY…WLGSETVLPV (303 aa)). One can recognise a Helicase ATP-binding 2 domain in the interval 1360–1537 (TVLYNTNDNV…WIGASSHGLF (178 aa)). 1373-1380 (APTGSGKT) contacts ATP. Residues 1479–1482 (DELH) carry the DELH box motif. The Helicase C-terminal 2 domain maps to 1574-1779 (AIVQHAKNKK…GVIENKQDAV (206 aa)). An SEC63 2 domain is found at 1839 to 2157 (PLNLGMIASY…LGCDQEYSFS (319 aa)).

The protein belongs to the DExH box helicase family. As to quaternary structure, interacts with CLO.

Its subcellular location is the nucleus. The catalysed reaction is ATP + H2O = ADP + phosphate + H(+). Functionally, RNA helicase that plays an essential role in pre-mRNA splicing as component of the U5 snRNP and U4/U6-U5 tri-snRNP complexes. Involved in spliceosome assembly, activation and disassembly. In Arabidopsis thaliana (Mouse-ear cress), this protein is DExH-box ATP-dependent RNA helicase DExH12.